The chain runs to 407 residues: Substance-P receptor (407 aa).

Over 1 to 31 the chain is Extracellular; it reads MDNVLPVDSDLSPNISTNTSEPNQFVQPAWQ. N-linked (GlcNAc...) asparagine glycans are attached at residues asparagine 14 and asparagine 18. A helical transmembrane segment spans residues 32–54; sequence IVLWAAAYTVIVVTSVVGNVVVM. Topologically, residues 55 to 64 are cytoplasmic; that stretch reads WIILAHKRMR. Residues 65-86 traverse the membrane as a helical segment; the sequence is TVTNYFLVNLAFAEASMAAFNT. Over 87 to 106 the chain is Extracellular; it reads VVNFTYAVHNEWYYGLFYCK. A disulfide bridge links cysteine 105 with cysteine 180. Residues 107 to 128 traverse the membrane as a helical segment; that stretch reads FHNFFPIAAVFASIYSMTAVAF. Residues 129 to 148 lie on the Cytoplasmic side of the membrane; it reads DRYMAIIHPLQPRLSATATK. The chain crosses the membrane as a helical span at residues 149 to 169; sequence VVICVIWVLALLLAFPQGYYS. Over 170–194 the chain is Extracellular; that stretch reads TTETMPSRVVCMIEWPEHPNKIYEK. The chain crosses the membrane as a helical span at residues 195–219; it reads VYHICVTVLIYFLPLLVIGYAYTVV. Residue histidine 197 participates in CP-96345 binding. Over 220–248 the chain is Cytoplasmic; it reads GITLWASEIPGDSSDRYHEQVSAKRKVVK. Residues 249-270 form a helical membrane-spanning segment; sequence MMIVVVCTFAICWLPFHIFFLL. The Extracellular portion of the chain corresponds to 271–283; that stretch reads PYINPDLYLKKFI. Residues 284 to 308 form a helical membrane-spanning segment; that stretch reads QQVYLAIMWLAMSSTMYNPIIYCCL. Residues 309–407 lie on the Cytoplasmic side of the membrane; that stretch reads NDRFRLGFKH…SFSFSSNVLS (99 aa). Cysteine 322 is lipidated: S-palmitoyl cysteine. The interval 364–407 is disordered; the sequence is AHEEEPEDGPKATPSSLDLTSNCSSRSDSKTMTESFSFSSNVLS. Positions 376 to 407 are enriched in polar residues; it reads TPSSLDLTSNCSSRSDSKTMTESFSFSSNVLS.

The protein belongs to the G-protein coupled receptor 1 family. Interacts with ARRB1.

The protein localises to the cell membrane. In terms of biological role, this is a receptor for the tachykinin neuropeptide substance P. It is probably associated with G proteins that activate a phosphatidylinositol-calcium second messenger system. The rank order of affinity of this receptor to tachykinins is: substance P &gt; substance K &gt; neuromedin-K. The polypeptide is Substance-P receptor (TACR1) (Homo sapiens (Human)).